A 2763-amino-acid chain; its full sequence is Large tegument protein deneddylase (2763 aa).

Residues 1–247 (MDIIPPIAVT…CDTYFTDEQY (247 aa)) form a deubiquitination activity region. The region spanning 12-237 (AGVGSRNQFD…SSAVTLIYGS (226 aa)) is the Peptidase C76 domain. Residues cysteine 32, aspartate 168, and histidine 170 contribute to the active site. The interaction with inner tegument protein stretch occupies residues 495–523 (LELFINLTILRLTGFVVENGTRTHHGATS). Tandem repeats lie at residues 2455–2457 (PVQ), 2458–2460 (PVQ), 2461–2463 (PAQ), 2464–2466 (PVQ), 2467–2469 (PAQ), 2470–2472 (PAQ), 2473–2475 (PVQ), and 2476–2478 (PAQ). An 8 X 3 AA repeats of P-A/V-Q region spans residues 2455-2478 (PVQPVQPAQPVQPAQPAQPVQPAQ). A disordered region spans residues 2630–2651 (NYKTRQPSPNFPRDVHTWGVSS).

It belongs to the herpesviridae large tegument protein family. Interacts with host CUL1 and CUL4A; these interactions inhibit the E3 ligase activity of cullins. Interacts with inner tegument protein. Interacts with capsid vertex specific component CVC2. Interacts with the major capsid protein/MCP.

Its subcellular location is the virion tegument. It is found in the host cytoplasm. The protein resides in the host nucleus. It catalyses the reaction Thiol-dependent hydrolysis of ester, thioester, amide, peptide and isopeptide bonds formed by the C-terminal Gly of ubiquitin (a 76-residue protein attached to proteins as an intracellular targeting signal).. Large tegument protein that plays multiple roles in the viral cycle. During viral entry, remains associated with the capsid while most of the tegument is detached and participates in the capsid transport toward the host nucleus. Plays a role in the routing of the capsid at the nuclear pore complex and subsequent uncoating. Within the host nucleus, acts as a deneddylase and promotes the degradation of nuclear CRLs (cullin-RING ubiquitin ligases) and thereby stabilizes nuclear CRL substrates, while cytoplasmic CRLs remain unaffected. These modifications prevent host cell cycle S-phase progression and create a favorable environment allowing efficient viral genome replication. Participates later in the secondary envelopment of capsids. Indeed, plays a linker role for the association of the outer viral tegument to the capsids together with the inner tegument protein. This is Large tegument protein deneddylase from Varicella-zoster virus (strain Oka vaccine) (HHV-3).